The following is a 181-amino-acid chain: Dual-action ribosomal maturation protein DarP (181 aa).

Positions 1-23 (MTGIKKPMSQYQDDNELEDWGPS) are disordered.

It belongs to the DarP family.

Its subcellular location is the cytoplasm. Its function is as follows. Member of a network of 50S ribosomal subunit biogenesis factors which assembles along the 30S-50S interface, preventing incorrect 23S rRNA structures from forming. Promotes peptidyl transferase center (PTC) maturation. The polypeptide is Dual-action ribosomal maturation protein DarP (Aeromonas salmonicida (strain A449)).